The sequence spans 341 residues: Glycerol-3-phosphate dehydrogenase [NAD(P)+] (341 aa).

Residues Ser14, Phe15, Arg35, and Lys108 each contribute to the NADPH site. The sn-glycerol 3-phosphate site is built by Lys108 and Gly136. Ser140 is a binding site for NADPH. 5 residues coordinate sn-glycerol 3-phosphate: Lys191, Asp244, Ser254, Arg255, and Asn256. Residue Lys191 is the Proton acceptor of the active site. Arg255 is an NADPH binding site. NADPH is bound by residues Val279 and Glu281.

It belongs to the NAD-dependent glycerol-3-phosphate dehydrogenase family.

It localises to the cytoplasm. The catalysed reaction is sn-glycerol 3-phosphate + NAD(+) = dihydroxyacetone phosphate + NADH + H(+). The enzyme catalyses sn-glycerol 3-phosphate + NADP(+) = dihydroxyacetone phosphate + NADPH + H(+). It participates in membrane lipid metabolism; glycerophospholipid metabolism. In terms of biological role, catalyzes the reduction of the glycolytic intermediate dihydroxyacetone phosphate (DHAP) to sn-glycerol 3-phosphate (G3P), the key precursor for phospholipid synthesis. The polypeptide is Glycerol-3-phosphate dehydrogenase [NAD(P)+] (Pseudomonas putida (strain GB-1)).